A 1142-amino-acid chain; its full sequence is Potassium channel subfamily T member 2 (1142 aa).

Residues 1–63 lie on the Cytoplasmic side of the membrane; it reads MVDLESEVPP…KNQRSSLRIR (63 aa). Residues 64 to 84 traverse the membrane as a helical segment; that stretch reads LFNFSLKLLSCLLYIIRVLLE. The Extracellular segment spans residues 85-101; that stretch reads KPSQGNDWSHIFWVNRS. Asn99 carries N-linked (GlcNAc...) asparagine glycosylation. Residues 102–122 form a helical membrane-spanning segment; sequence LPLWGLQVSVALISLFETILL. Residues 123-137 lie on the Cytoplasmic side of the membrane; sequence GYLSYKGNIWEQILR. The helical transmembrane segment at 138-158 threads the bilayer; it reads VPFILEIINAVPFIISIFWPT. At 159–160 the chain is on the extracellular side; sequence LR. A helical transmembrane segment spans residues 161 to 173; sequence NLFVPVFLNCWLA. Residues 174 to 198 are Cytoplasmic-facing; the sequence is KHALENMINDLHRAIQRTQSAMFNQ. The chain crosses the membrane as a helical span at residues 199 to 219; sequence VLILISTLLCLIFTCICGIQH. Residues 220-228 lie on the Extracellular side of the membrane; it reads LERIGKKLN. Residues 229 to 249 constitute an intramembrane region (pore-forming); sequence LFDSLYFCIVTFSTVGFGDVT. Residues 250 to 256 lie on the Extracellular side of the membrane; sequence PETWSSK. The helical transmembrane segment at 257 to 277 threads the bilayer; it reads LFVVAMICVALVVLPIQFEQL. Over 278-1142 the chain is Cytoplasmic; the sequence is AYLWMERQKS…VQDSREETQL (865 aa). RCK N-terminal domains are found at residues 299 to 435 and 725 to 865; these read EKHV…DHVV and NKLI…CYSL. 2 disordered regions span residues 989 to 1044 and 1118 to 1142; these read DTKD…EKIT and PNSE…ETQL. Basic residues predominate over residues 1017–1037; that stretch reads LRRKSMQWARRLSRKGPKHSG. Residues 1118–1129 show a composition bias toward polar residues; sequence PNSEPSRKNSIC.

The protein belongs to the potassium channel family. Calcium-activated (TC 1.A.1.3) subfamily. KCa4.2/KCNT2 sub-subfamily. In terms of assembly, homotetramer. Forms heteromer with KCNT1; heteromeric channels differ from those of homomeric channels in their unitary conductance, kinetic behavior, subcellular localization, and response to activation of protein kinase C. Post-translationally, phosphorylated by protein kinase C. Phosphorylation of the C-terminal domain inhibits channel activity. In terms of tissue distribution, detected in brain, and at low levels in heart. Detected in brainstem, including auditory neurons such as the medial nucleus of the trapezoid body. Detected in the olfactory bulb, red nucleus, facial nucleus, pontine nucleus, oculomotor nucleus, substantia nigra, deep cerebellar nuclei, vestibular nucleus, and the thalamus. Detected in hippocampal CA1, CA2, and CA3 regions, the dentate gyrus, supraoptic nucleus, hypothalamus, dorsal root ganglion, and cortical layers II, III, and V. Detected in striatum cholinergic interneurons.

It localises to the cell membrane. It catalyses the reaction K(+)(in) = K(+)(out). Its activity is regulated as follows. Are normally in a closed state unless activated by an increase in intracellular Na(+) and Cl(-). Inhibited upon stimulation of G-protein coupled receptors, such as CHRM1 and GRM1. There is conflicting data about the effect of ATP on KNCT2 channels activity. Intracellular ATP was initially report to inhibit the channel activity. However, others studies conclude that KNCT2 channels are not inhibited by intracellular ATP. Sodium-activated and chloride-activated potassium channel. Produces rapidly activating outward rectifier K(+) currents. Contributes to regulate neuronal excitability. This is Potassium channel subfamily T member 2 (Kcnt2) from Rattus norvegicus (Rat).